The following is a 633-amino-acid chain: Extracellular metalloproteinase 3 (633 aa).

An N-terminal signal peptide occupies residues 1 to 18 (MHGLLLAGLLALPMNVLA). A propeptide spanning residues 19–246 (HPAEQHASNV…VHNVVDYVAS (228 aa)) is cleaved from the precursor. N-linked (GlcNAc...) asparagine glycosylation is present at N410. H429 serves as a coordination point for Zn(2+). Residue E430 is part of the active site. H433 is a Zn(2+) binding site. N-linked (GlcNAc...) asparagine glycosylation is found at N480 and N622.

The protein belongs to the peptidase M36 family. Zn(2+) is required as a cofactor.

It is found in the secreted. Its function is as follows. Secreted metalloproteinase probably acting as a virulence factor. The chain is Extracellular metalloproteinase 3 (MEP3) from Trichophyton tonsurans (Scalp ringworm fungus).